Consider the following 300-residue polypeptide: Geranylgeranyl diphosphate synthase (300 aa).

Isopentenyl diphosphate-binding residues include K50, R53, and H82. Mg(2+)-binding residues include D89 and D95. A (2E,6E)-farnesyl diphosphate-binding site is contributed by R100. R101 lines the isopentenyl diphosphate pocket. (2E,6E)-farnesyl diphosphate-binding residues include K186, T187, and Q224.

It belongs to the FPP/GGPP synthase family. Mg(2+) serves as cofactor.

The protein resides in the plastid. The protein localises to the cyanelle. The catalysed reaction is isopentenyl diphosphate + (2E,6E)-farnesyl diphosphate = (2E,6E,10E)-geranylgeranyl diphosphate + diphosphate. It participates in isoprenoid biosynthesis; geranylgeranyl diphosphate biosynthesis; geranylgeranyl diphosphate from farnesyl diphosphate and isopentenyl diphosphate: step 1/1. Functionally, catalyzes the condensation of farnesyl diphosphate (FPP) and isopentenyl diphosphate (IPP) to yield geranylgeranyl diphosphate (GGPP) needed for biosynthesis of carotenoids and diterpenes. The chain is Geranylgeranyl diphosphate synthase (crtE) from Cyanophora paradoxa.